The primary structure comprises 396 residues: F-box protein At2g21930 (396 aa).

An F-box domain is found at 19–65 (SGNSVQIPFDLIPEILKRLPVKTLARFLSVSKEYTSIIRNRDFMKSY).

The sequence is that of F-box protein At2g21930 from Arabidopsis thaliana (Mouse-ear cress).